The primary structure comprises 329 residues: Tryptophan--tRNA ligase (329 aa).

ATP contacts are provided by residues 9–11 (QPS) and 17–18 (GN). The 'HIGH' region signature appears at 10-18 (PSGIPTIGN). D133 lines the L-tryptophan pocket. ATP-binding positions include 145 to 147 (GDD), V184, and 193 to 197 (KMSKS). The short motif at 193 to 197 (KMSKS) is the 'KMSKS' region element.

The protein belongs to the class-I aminoacyl-tRNA synthetase family. Homodimer.

It is found in the cytoplasm. It carries out the reaction tRNA(Trp) + L-tryptophan + ATP = L-tryptophyl-tRNA(Trp) + AMP + diphosphate + H(+). Catalyzes the attachment of tryptophan to tRNA(Trp). The sequence is that of Tryptophan--tRNA ligase from Staphylococcus epidermidis (strain ATCC 35984 / DSM 28319 / BCRC 17069 / CCUG 31568 / BM 3577 / RP62A).